The chain runs to 92 residues: Large ribosomal subunit protein eL43 (92 aa).

A C4-type zinc finger spans residues 39–60 (CSFCGKKAVKRGAAGIWNCSSC).

The protein belongs to the eukaryotic ribosomal protein eL43 family.

This chain is Large ribosomal subunit protein eL43 (RPL43), found in Eremothecium gossypii (strain ATCC 10895 / CBS 109.51 / FGSC 9923 / NRRL Y-1056) (Yeast).